We begin with the raw amino-acid sequence, 561 residues long: DNA ligase B (561 aa).

The N6-AMP-lysine intermediate role is filled by lysine 128.

This sequence belongs to the NAD-dependent DNA ligase family. LigB subfamily.

The enzyme catalyses NAD(+) + (deoxyribonucleotide)n-3'-hydroxyl + 5'-phospho-(deoxyribonucleotide)m = (deoxyribonucleotide)n+m + AMP + beta-nicotinamide D-nucleotide.. Catalyzes the formation of phosphodiester linkages between 5'-phosphoryl and 3'-hydroxyl groups in double-stranded DNA using NAD as a coenzyme and as the energy source for the reaction. This chain is DNA ligase B, found in Pseudomonas syringae pv. tomato (strain ATCC BAA-871 / DC3000).